Reading from the N-terminus, the 206-residue chain is FMN-dependent NADH:quinone oxidoreductase (206 aa).

FMN-binding positions include 15–17 (SVS), 94–97 (MYNF), and 138–141 (TRGG).

It belongs to the azoreductase type 1 family. In terms of assembly, homodimer. Requires FMN as cofactor.

It catalyses the reaction 2 a quinone + NADH + H(+) = 2 a 1,4-benzosemiquinone + NAD(+). The enzyme catalyses N,N-dimethyl-1,4-phenylenediamine + anthranilate + 2 NAD(+) = 2-(4-dimethylaminophenyl)diazenylbenzoate + 2 NADH + 2 H(+). Its function is as follows. Quinone reductase that provides resistance to thiol-specific stress caused by electrophilic quinones. Functionally, also exhibits azoreductase activity. Catalyzes the reductive cleavage of the azo bond in aromatic azo compounds to the corresponding amines. The sequence is that of FMN-dependent NADH:quinone oxidoreductase from Rhizobium meliloti (strain 1021) (Ensifer meliloti).